Consider the following 265-residue polypeptide: AT-hook motif nuclear-localized protein 18 (265 aa).

The disordered stretch occupies residues 1–75; it reads MDEVSRSHTP…AGSKNKPKAP (75 aa). The segment covering 19-30 has biased composition (basic residues); sequence HYHHQNAGRQKR. Residues 59-71 constitute a DNA-binding region (a.T hook); sequence RRPRGRPAGSKNK. In terms of domain architecture, PPC spans 83–217; sequence ANAFRCHVME…EEEETEREID (135 aa).

The protein localises to the nucleus. Transcription factor that specifically binds AT-rich DNA sequences related to the nuclear matrix attachment regions (MARs). Acts redundantly with AHL22, AHL27 and AHL29 in the regulation of flowering and regulation of the hypocotyl elongation. In Arabidopsis thaliana (Mouse-ear cress), this protein is AT-hook motif nuclear-localized protein 18.